The sequence spans 404 residues: MKLPIYLDYAATTPVDPRVAEKMFQCMTMDGIFGNPASRSHRYGWQAEEAVDIARNQIAELINADHREIVFTSGATESNNLAIKGVAHFYHKKGKHIITSKTEHKAVLDTCRQLEREGFEVTYLEPAANGIIPMERLETAMRDDTILVSIMHVNNEIGVIHDIDAIGELCRSKGIIFHMDAAQSAGKVPIDVQATKVDLISISGHKMYGPKGIGALYVRRKPRIRLEAQMHGGGHERGMRSGTLPTHQIVGLGEAAAIAKAEMASDDARIGALRDKLWNGIKHIEETYINGDAIERVSGSLNVSFNYVEGESLMMALKDLAVSSGSACTSASLEPSYVLRALGLNDEMAHSSIRFSIGRFTTEEEIDHAIEVITQSIDKLREMSPLWEMFKDGIDLNQVQWAHH.

Residues 75–76 (AT), N155, Q183, and 203–205 (SGH) contribute to the pyridoxal 5'-phosphate site. K206 bears the N6-(pyridoxal phosphate)lysine mark. A pyridoxal 5'-phosphate-binding site is contributed by T243. Catalysis depends on C328, which acts as the Cysteine persulfide intermediate. Position 328 (C328) interacts with [2Fe-2S] cluster.

Belongs to the class-V pyridoxal-phosphate-dependent aminotransferase family. NifS/IscS subfamily. In terms of assembly, homodimer. Forms a heterotetramer with IscU, interacts with other sulfur acceptors. The cofactor is pyridoxal 5'-phosphate.

The protein resides in the cytoplasm. It catalyses the reaction (sulfur carrier)-H + L-cysteine = (sulfur carrier)-SH + L-alanine. The protein operates within cofactor biosynthesis; iron-sulfur cluster biosynthesis. Its function is as follows. Master enzyme that delivers sulfur to a number of partners involved in Fe-S cluster assembly, tRNA modification or cofactor biosynthesis. Catalyzes the removal of elemental sulfur atoms from cysteine to produce alanine. Functions as a sulfur delivery protein for Fe-S cluster synthesis onto IscU, an Fe-S scaffold assembly protein, as well as other S acceptor proteins. The sequence is that of Cysteine desulfurase IscS from Shewanella baltica (strain OS155 / ATCC BAA-1091).